Here is a 192-residue protein sequence, read N- to C-terminus: Large ribosomal subunit protein uL6 (192 aa).

It belongs to the universal ribosomal protein uL6 family. Component of the large ribosomal subunit.

The protein resides in the cytoplasm. Its function is as follows. Component of the large ribosomal subunit. The ribosome is a large ribonucleoprotein complex responsible for the synthesis of proteins in the cell. This Ictalurus punctatus (Channel catfish) protein is Large ribosomal subunit protein uL6 (rpl9).